A 115-amino-acid chain; its full sequence is Protein translation factor SUI1 homolog (115 aa).

The protein belongs to the SUI1 family.

In terms of biological role, probably involved in translation. The polypeptide is Protein translation factor SUI1 homolog (Sporobolus stapfianus (Ressurection grass)).